Here is a 926-residue protein sequence, read N- to C-terminus: Sperm-associated antigen 1 (926 aa).

TPR repeat units lie at residues 209–242, 244–275, and 276–309; these read ATRE…LPTV, AYNN…EPGN, and VKAL…EPDN. The interval 318–452 is disordered; that stretch reads EVERDLKNSE…ENPAGLKSQG (135 aa). Residues Ser-347 and Ser-354 each carry the phosphoserine modification. A compositionally biased stretch (basic and acidic residues) spans 352-368; sequence GKSGRKHEDGGGDKKPA. The span at 369–379 shows a compositional bias: low complexity; it reads EPAGAARAAQP. A Phosphoserine modification is found at Ser-423. Positions 428 to 441 are enriched in gly residues; the sequence is AGGGATGHPGGGQG. TPR repeat units lie at residues 445 to 478, 487 to 520, 522 to 554, 623 to 656, 657 to 690, and 692 to 724; these read PAGL…LEPA, SILY…HPFS, KPLL…DCGL, FKAL…NNKE, CAIY…ADGN, and KAFY…DPSI. 2 stretches are compositionally biased toward basic and acidic residues: residues 758-769 and 784-799; these read IQEVNEGKEEPG and KGGK…EKLP. The disordered stretch occupies residues 758–801; that stretch reads IQEVNEGKEEPGRPAGEVSMGCLASEKGGKSSRSPEDPEKLPIA. Position 781–788 (781–788) interacts with GTP; sequence ASEKGGKS. Ser-791 is modified (phosphoserine).

Present in most tissues, including lung, with the strongest expression in brain, colon, kidney, and testis. In sperm and testis, detected in particular in pachytene primary spermatocytes. Up-regulated in pancreatic tumor tissues and not in normal pancreatic tissue.

It localises to the cytoplasm. Its subcellular location is the dynein axonemal particle. In terms of biological role, may play a role in the cytoplasmic assembly of the ciliary dynein arms. May play a role in fertilization. Binds GTP and has GTPase activity. This chain is Sperm-associated antigen 1 (SPAG1), found in Homo sapiens (Human).